Here is a 69-residue protein sequence, read N- to C-terminus: UPF0248 protein AF_0420 (69 aa).

It belongs to the UPF0248 family.

This is UPF0248 protein AF_0420 from Archaeoglobus fulgidus (strain ATCC 49558 / DSM 4304 / JCM 9628 / NBRC 100126 / VC-16).